Here is a 408-residue protein sequence, read N- to C-terminus: 8-amino-7-oxononanoate synthase (408 aa).

Residue Arg20 coordinates substrate. 117–118 (GY) is a binding site for pyridoxal 5'-phosphate. His142 is a substrate binding site. Ser188, His216, and Thr244 together coordinate pyridoxal 5'-phosphate. Lys247 carries the N6-(pyridoxal phosphate)lysine modification. Thr367 contributes to the substrate binding site.

The protein belongs to the class-II pyridoxal-phosphate-dependent aminotransferase family. BioF subfamily. As to quaternary structure, homodimer. The cofactor is pyridoxal 5'-phosphate.

It carries out the reaction 6-carboxyhexanoyl-[ACP] + L-alanine + H(+) = (8S)-8-amino-7-oxononanoate + holo-[ACP] + CO2. It participates in cofactor biosynthesis; biotin biosynthesis. Catalyzes the decarboxylative condensation of pimeloyl-[acyl-carrier protein] and L-alanine to produce 8-amino-7-oxononanoate (AON), [acyl-carrier protein], and carbon dioxide. The chain is 8-amino-7-oxononanoate synthase from Cupriavidus pinatubonensis (strain JMP 134 / LMG 1197) (Cupriavidus necator (strain JMP 134)).